The chain runs to 82 residues: Putative membrane protein insertion efficiency factor (82 aa).

It belongs to the UPF0161 family.

It is found in the cell inner membrane. In terms of biological role, could be involved in insertion of integral membrane proteins into the membrane. The polypeptide is Putative membrane protein insertion efficiency factor (Rickettsia typhi (strain ATCC VR-144 / Wilmington)).